The following is a 362-amino-acid chain: Aminomethyltransferase (362 aa).

The protein belongs to the GcvT family. The glycine cleavage system is composed of four proteins: P, T, L and H.

It catalyses the reaction N(6)-[(R)-S(8)-aminomethyldihydrolipoyl]-L-lysyl-[protein] + (6S)-5,6,7,8-tetrahydrofolate = N(6)-[(R)-dihydrolipoyl]-L-lysyl-[protein] + (6R)-5,10-methylene-5,6,7,8-tetrahydrofolate + NH4(+). Its function is as follows. The glycine cleavage system catalyzes the degradation of glycine. In Porphyromonas gingivalis (strain ATCC 33277 / DSM 20709 / CIP 103683 / JCM 12257 / NCTC 11834 / 2561), this protein is Aminomethyltransferase.